The following is a 462-amino-acid chain: NAD-capped RNA hydrolase NUDT12 (462 aa).

ANK repeat units lie at residues 11–40 (EIVTQFHCSAAEGDIAKLTGILSHSPSLLN), 45–74 (NGWTALMYAARNGHPEIVQFLLEKGCDRSI), and 78–98 (SRQTALDIAVFWGYKHIANLL). Lysine 185 is subject to N6-succinyllysine. 2 residues coordinate Zn(2+): cysteine 284 and cysteine 287. N6-succinyllysine is present on lysine 292. Positions 302 and 307 each coordinate Zn(2+). Substrate is bound by residues tyrosine 318, 354–356 (AGF), glutamate 370, glutamate 374, and glutamate 415. Residues 319–453 (PRVDPVVIMQ…SRAIAHQLIK (135 aa)) form the Nudix hydrolase domain. Positions 354, 370, 374, and 415 each coordinate Mg(2+). Positions 355-376 (GFIEPGETIEDAVRREVEEESG) match the Nudix box motif. Positions 460-462 (PNL) match the Microbody targeting signal motif.

It belongs to the Nudix hydrolase family. NudC subfamily. Homodimer. Homodimerization is essential for its catalytic activity and protein stability. Interacts (via ANK repeats) with BLMH. Requires Mg(2+) as cofactor. Zn(2+) is required as a cofactor.

It localises to the cytoplasm. It is found in the peroxisome. The protein localises to the cytoplasmic granule. The enzyme catalyses a 5'-end NAD(+)-phospho-ribonucleoside in mRNA + H2O = a 5'-end phospho-adenosine-phospho-ribonucleoside in mRNA + beta-nicotinamide D-ribonucleotide + 2 H(+). The catalysed reaction is NAD(+) + H2O = beta-nicotinamide D-ribonucleotide + AMP + 2 H(+). It carries out the reaction NADH + H2O = reduced beta-nicotinamide D-ribonucleotide + AMP + 2 H(+). It catalyses the reaction NADPH + H2O = reduced beta-nicotinamide D-ribonucleotide + adenosine 2',5'-bisphosphate + 2 H(+). Functionally, mRNA decapping enzyme that specifically removes the nicotinamide adenine dinucleotide (NAD) cap from a subset of mRNAs by hydrolyzing the diphosphate linkage to produce nicotinamide mononucleotide (NMN) and 5' monophosphate mRNA. The NAD-cap is present at the 5'-end of some RNAs; in contrast to the canonical N7 methylguanosine (m7G) cap, the NAD cap promotes mRNA decay. Preferentially acts on NAD-capped transcripts in response to nutrient stress. Also acts on free nicotinamide adenine dinucleotide molecules: hydrolyzes NAD(H) into NMN(H) and AMP, and NADPH into NMNH and 2',5'-ADP. May act to regulate the concentration of peroxisomal nicotinamide nucleotide cofactors required for oxidative metabolism in this organelle. Regulates the levels of circadian clock components PER1, PER2, PER3 and CRY2 in the liver. The sequence is that of NAD-capped RNA hydrolase NUDT12 from Homo sapiens (Human).